A 469-amino-acid chain; its full sequence is 3-isopropylmalate dehydratase large subunit (469 aa).

The [4Fe-4S] cluster site is built by Cys350, Cys410, and Cys413.

Belongs to the aconitase/IPM isomerase family. LeuC type 1 subfamily. Heterodimer of LeuC and LeuD. The cofactor is [4Fe-4S] cluster.

It catalyses the reaction (2R,3S)-3-isopropylmalate = (2S)-2-isopropylmalate. It participates in amino-acid biosynthesis; L-leucine biosynthesis; L-leucine from 3-methyl-2-oxobutanoate: step 2/4. Functionally, catalyzes the isomerization between 2-isopropylmalate and 3-isopropylmalate, via the formation of 2-isopropylmaleate. In Rhizobium rhizogenes (strain K84 / ATCC BAA-868) (Agrobacterium radiobacter), this protein is 3-isopropylmalate dehydratase large subunit.